We begin with the raw amino-acid sequence, 476 residues long: Cytochrome c oxidase subunit 1 (476 aa).

The chain crosses the membrane as a helical span at residues 19-39 (LYYLWFSFLFGSYGFLLSVIL). E42 serves as a coordination point for Ca(2+). 8 helical membrane passes run 61–81 (MIFTIHGIIMIFFNIMPGLFG), 105–125 (ISLLLQPIAFVLVILSTAAEF), 151–171 (VIIFGLLVSGVASIMSSLNFI), 194–214 (LIITSGMLLLTLPVLTGGVLM), 240–260 (LFWFFGHPEVYILILPAFGVI), 278–298 (MILAMGCIAVLGSLVWVHHMY), 310–330 (FTSTTILISIPTGTKVFNWIC), and 345–365 (LLSLLFICTFTFGGTTGVILG). H66 contacts Fe(II)-heme a. H246 serves as a coordination point for Cu cation. The 1'-histidyl-3'-tyrosine (His-Tyr) cross-link spans 246–250 (HPEVY). Y250 is a binding site for O2. Cu cation contacts are provided by H295 and H296. 2 residues coordinate Mg(2+): H374 and D375. The next 2 helical transmembrane spans lie at 379–399 (VIAHFHFVLSIGAIIGLFTTV) and 415–435 (SIVILWSMLFFVGVILTFLPM). H382 contacts heme a3. H384 contacts Fe(II)-heme a. P448 lines the Ca(2+) pocket. Residues 455 to 475 (NGWNMICSIGSTMTLFGLLIF) form a helical membrane-spanning segment.

Belongs to the heme-copper respiratory oxidase family. In terms of assembly, component of the cytochrome c oxidase (complex IV, CIV), a multisubunit enzyme composed of a catalytic core of 3 subunits and several supernumerary subunits. The complex exists as a monomer or a dimer and forms supercomplexes (SCs) in the inner mitochondrial membrane with ubiquinol-cytochrome c oxidoreductase (cytochrome b-c1 complex, complex III, CIII). It depends on heme as a cofactor. Cu cation serves as cofactor.

It is found in the mitochondrion inner membrane. It carries out the reaction 4 Fe(II)-[cytochrome c] + O2 + 8 H(+)(in) = 4 Fe(III)-[cytochrome c] + 2 H2O + 4 H(+)(out). It participates in energy metabolism; oxidative phosphorylation. Component of the cytochrome c oxidase, the last enzyme in the mitochondrial electron transport chain which drives oxidative phosphorylation. The respiratory chain contains 3 multisubunit complexes succinate dehydrogenase (complex II, CII), ubiquinol-cytochrome c oxidoreductase (cytochrome b-c1 complex, complex III, CIII) and cytochrome c oxidase (complex IV, CIV), that cooperate to transfer electrons derived from NADH and succinate to molecular oxygen, creating an electrochemical gradient over the inner membrane that drives transmembrane transport and the ATP synthase. Cytochrome c oxidase is the component of the respiratory chain that catalyzes the reduction of oxygen to water. Electrons originating from reduced cytochrome c in the intermembrane space (IMS) are transferred via the dinuclear copper A center (CU(A)) of subunit 2 and heme A of subunit 1 to the active site in subunit 1, a binuclear center (BNC) formed by heme A3 and copper B (CU(B)). The BNC reduces molecular oxygen to 2 water molecules using 4 electrons from cytochrome c in the IMS and 4 protons from the mitochondrial matrix. The protein is Cytochrome c oxidase subunit 1 (MT-CO1) of Plasmodium falciparum.